The following is a 202-amino-acid chain: Thymidylate kinase (202 aa).

Residue 7 to 14 (GTEGVGKT) coordinates ATP.

It belongs to the thymidylate kinase family.

It carries out the reaction dTMP + ATP = dTDP + ADP. In terms of biological role, phosphorylation of dTMP to form dTDP in both de novo and salvage pathways of dTTP synthesis. This is Thymidylate kinase from Acinetobacter baylyi (strain ATCC 33305 / BD413 / ADP1).